Reading from the N-terminus, the 172-residue chain is Large ribosomal subunit protein uL10 (172 aa).

Belongs to the universal ribosomal protein uL10 family. In terms of assembly, part of the ribosomal stalk of the 50S ribosomal subunit. The N-terminus interacts with L11 and the large rRNA to form the base of the stalk. The C-terminus forms an elongated spine to which L12 dimers bind in a sequential fashion forming a multimeric L10(L12)X complex.

Its function is as follows. Forms part of the ribosomal stalk, playing a central role in the interaction of the ribosome with GTP-bound translation factors. This chain is Large ribosomal subunit protein uL10, found in Ruegeria sp. (strain TM1040) (Silicibacter sp.).